Here is an 839-residue protein sequence, read N- to C-terminus: Eukaryotic translation initiation factor 3 subunit C (839 aa).

Residues 1–93 (MSRFFVAGYN…DSDSEDEGRR (93 aa)) are disordered. 2 stretches are compositionally biased toward acidic residues: residues 14 to 27 (SSEE…DEEL) and 34 to 58 (GEQE…SDSD). In terms of domain architecture, PCI spans 585–759 (FHQHINLELL…AFIQFASTEP (175 aa)). Positions 783 to 839 (EKTSSNGYGKKQPQQQQQQQQQQQQQQQQQKDLLQEDNSRFRYANVNTNNDEFQTTA) are disordered. Residues 794–812 (QPQQQQQQQQQQQQQQQQQ) are compositionally biased toward low complexity. Over residues 827–839 (NVNTNNDEFQTTA) the composition is skewed to polar residues.

This sequence belongs to the eIF-3 subunit C family. As to quaternary structure, component of the eukaryotic translation initiation factor 3 (eIF-3) complex.

It localises to the cytoplasm. In terms of biological role, component of the eukaryotic translation initiation factor 3 (eIF-3) complex, which is involved in protein synthesis of a specialized repertoire of mRNAs and, together with other initiation factors, stimulates binding of mRNA and methionyl-tRNAi to the 40S ribosome. The eIF-3 complex specifically targets and initiates translation of a subset of mRNAs involved in cell proliferation. This is Eukaryotic translation initiation factor 3 subunit C from Scheffersomyces stipitis (strain ATCC 58785 / CBS 6054 / NBRC 10063 / NRRL Y-11545) (Yeast).